The primary structure comprises 465 residues: Asparagine--tRNA ligase (465 aa).

This sequence belongs to the class-II aminoacyl-tRNA synthetase family. As to quaternary structure, homodimer.

Its subcellular location is the cytoplasm. The enzyme catalyses tRNA(Asn) + L-asparagine + ATP = L-asparaginyl-tRNA(Asn) + AMP + diphosphate + H(+). In Clostridium perfringens (strain SM101 / Type A), this protein is Asparagine--tRNA ligase.